The sequence spans 251 residues: 2,3-bisphosphoglycerate-dependent phosphoglycerate mutase (251 aa).

Substrate is bound by residues 8–15 (RHGESLWN), 21–22 (TG), R60, 87–90 (ERHY), K98, 114–115 (RR), and 183–184 (GN). H9 (tele-phosphohistidine intermediate) is an active-site residue. E87 serves as the catalytic Proton donor/acceptor.

It belongs to the phosphoglycerate mutase family. BPG-dependent PGAM subfamily.

The catalysed reaction is (2R)-2-phosphoglycerate = (2R)-3-phosphoglycerate. Its pathway is carbohydrate degradation; glycolysis; pyruvate from D-glyceraldehyde 3-phosphate: step 3/5. In terms of biological role, catalyzes the interconversion of 2-phosphoglycerate and 3-phosphoglycerate. This is 2,3-bisphosphoglycerate-dependent phosphoglycerate mutase from Thermoanaerobacter sp. (strain X514).